The following is a 407-amino-acid chain: Phosphopentomutase (407 aa).

Mn(2+)-binding residues include Asp-10, Asp-306, His-311, Asp-347, His-348, and His-359.

Belongs to the phosphopentomutase family. Mn(2+) is required as a cofactor.

It is found in the cytoplasm. It carries out the reaction 2-deoxy-alpha-D-ribose 1-phosphate = 2-deoxy-D-ribose 5-phosphate. The enzyme catalyses alpha-D-ribose 1-phosphate = D-ribose 5-phosphate. It functions in the pathway carbohydrate degradation; 2-deoxy-D-ribose 1-phosphate degradation; D-glyceraldehyde 3-phosphate and acetaldehyde from 2-deoxy-alpha-D-ribose 1-phosphate: step 1/2. In terms of biological role, isomerase that catalyzes the conversion of deoxy-ribose 1-phosphate (dRib-1-P) and ribose 1-phosphate (Rib-1-P) to deoxy-ribose 5-phosphate (dRib-5-P) and ribose 5-phosphate (Rib-5-P), respectively. This is Phosphopentomutase from Yersinia pestis bv. Antiqua (strain Angola).